The chain runs to 329 residues: Mas-related G-protein coupled receptor member X2 (329 aa).

The Extracellular portion of the chain corresponds to 1-33 (MDPTTPAWGTESTTMNGNDQALPLLCGKETMIS). Residues 34 to 54 (VFLILFIALVGLVGNAFVLWL) traverse the membrane as a helical segment. Residues 55-63 (LGFRMRRNA) are Cytoplasmic-facing. The helical transmembrane segment at 64 to 84 (FSVYVLSLAGADFLFLCFQMT) threads the bilayer. At 85–96 (SCLAYLINFFGS) the chain is on the extracellular side. The chain crosses the membrane as a helical span at residues 97–116 (ISINIPSFFTVMTCAYLAGL). At 117 to 143 (SMLSAISTERCLSVLWPIWYRCRRPRH) the chain is on the cytoplasmic side. Residues 144-164 (LSAVMCVLLWALSLLLSILEG) form a helical membrane-spanning segment. Residues 165–183 (KFCGFLFSDDDPGWCQTFD) are Extracellular-facing. Residues 184–204 (FITAAWLMFLFVVLCGSSLAL) form a helical membrane-spanning segment. The Cytoplasmic segment spans residues 205-227 (LVRILCGSRSLPLTRLYLTILLT). Residues 228-248 (VLIFLLCGLPFGIQWFLILWI) form a helical membrane-spanning segment. Topologically, residues 249-263 (WKNSVVLFCHIHPIS) are extracellular. The chain crosses the membrane as a helical span at residues 264-284 (VVLSSFNSSANPIIYFFVGSF). Topologically, residues 285-329 (RKQWRLRQPILKLALQRALQDTAEVDHSEGCFSQGTLEMSRSSLV) are cytoplasmic.

Belongs to the G-protein coupled receptor 1 family. Mas subfamily.

It localises to the cell membrane. Functionally, mast cell-specific receptor for basic secretagogues, i.e. cationic amphiphilic drugs, as well as endo- or exogenous peptides, consisting of a basic head group and a hydrophobic core. Recognizes and binds small molecules containing a cyclized tetrahydroisoquinoline (THIQ), such as non-steroidal neuromuscular blocking drugs (NMBDs), including tubocurarine and atracurium. In response to these compounds, mediates pseudo-allergic reactions characterized by histamine release, inflammation and airway contraction. In Macaca mulatta (Rhesus macaque), this protein is Mas-related G-protein coupled receptor member X2 (MRGPRX2).